A 425-amino-acid polypeptide reads, in one-letter code: Glutamate-1-semialdehyde 2,1-aminomutase (425 aa).

K264 bears the N6-(pyridoxal phosphate)lysine mark.

This sequence belongs to the class-III pyridoxal-phosphate-dependent aminotransferase family. HemL subfamily. As to quaternary structure, homodimer. Pyridoxal 5'-phosphate serves as cofactor.

It is found in the cytoplasm. The catalysed reaction is (S)-4-amino-5-oxopentanoate = 5-aminolevulinate. It participates in porphyrin-containing compound metabolism; protoporphyrin-IX biosynthesis; 5-aminolevulinate from L-glutamyl-tRNA(Glu): step 2/2. The polypeptide is Glutamate-1-semialdehyde 2,1-aminomutase (Campylobacter lari (strain RM2100 / D67 / ATCC BAA-1060)).